The chain runs to 503 residues: 2-(3-amino-3-carboxypropyl)histidine synthase subunit 2 (503 aa).

[4Fe-4S] cluster is bound by residues C93, C114, and C334. The disordered stretch occupies residues 464–503 (GLDSVDEGEGPSKLYEGQSGIAKGYVGEGSKEKIQRDFGK). Positions 492 to 503 (GSKEKIQRDFGK) are enriched in basic and acidic residues.

The protein belongs to the DPH1/DPH2 family. DPH2 subfamily. As to quaternary structure, component of the 2-(3-amino-3-carboxypropyl)histidine synthase complex composed of dph1, dph2, dph3 and a NADH-dependent reductase, predominantly cbr1. The cofactor is [4Fe-4S] cluster.

The protein resides in the cytoplasm. It functions in the pathway protein modification; peptidyl-diphthamide biosynthesis. In terms of biological role, required for the first step of diphthamide biosynthesis, a post-translational modification of histidine which occurs in elongation factor 2. Dph1 and dph2 transfer a 3-amino-3-carboxypropyl (ACP) group from S-adenosyl-L-methionine (SAM) to a histidine residue, the reaction is assisted by a reduction system comprising dph3 and a NADH-dependent reductase, predominantly cbr1. Facilitates the reduction of the catalytic iron-sulfur cluster found in the dph1 subunit. This is 2-(3-amino-3-carboxypropyl)histidine synthase subunit 2 from Schizosaccharomyces pombe (strain 972 / ATCC 24843) (Fission yeast).